The chain runs to 206 residues: Ras-related protein Ral-B (206 aa).

Residue 21 to 29 (GSGGVGKSA) participates in GTP binding. Residues 43–51 (YEPTKADSY) carry the Effector region motif. Residues 68–72 (DTAGQ), 128–131 (NKSD), and 158–160 (SAK) contribute to the GTP site. Residues 180–189 (KMSENKDKNG) are compositionally biased toward basic and acidic residues. The segment at 180–206 (KMSENKDKNGKKSSKNKKSFKERCCLL) is disordered. C203 is modified (cysteine methyl ester). C203 is lipidated: S-geranylgeranyl cysteine. Positions 204 to 206 (CLL) are cleaved as a propeptide — removed in mature form.

Belongs to the small GTPase superfamily. Ras family. Interacts with EXOC2/Sec5 and EXOC8/Exo84. Interacts (via effector domain) with RALBP1. Prenylation is essential for membrane localization. In terms of processing, the farnesylated form confers resistance to the proapoptotic and anti-anchorage-dependent growth effects of some geranylgeranyltransferase I inhibitors.

The protein resides in the cell membrane. It is found in the midbody. The catalysed reaction is GTP + H2O = GDP + phosphate + H(+). Alternates between an inactive form bound to GDP and an active form bound to GTP. Activated by a guanine nucleotide-exchange factor (GEF) and inactivated by a GTPase-activating protein (GAP). Functionally, multifunctional GTPase involved in a variety of cellular processes including gene expression, cell migration, cell proliferation, oncogenic transformation and membrane trafficking. Accomplishes its multiple functions by interacting with distinct downstream effectors. Acts as a GTP sensor for GTP-dependent exocytosis of dense core vesicles. Required both to stabilize the assembly of the exocyst complex and to localize functional exocyst complexes to the leading edge of migrating cells. Required for suppression of apoptosis. In late stages of cytokinesis, upon completion of the bridge formation between dividing cells, mediates exocyst recruitment to the midbody to drive abscission. Involved in ligand-dependent receptor mediated endocytosis of the EGF and insulin receptors. In Pongo abelii (Sumatran orangutan), this protein is Ras-related protein Ral-B (RALB).